Here is a 319-residue protein sequence, read N- to C-terminus: MSLNFLEFEKPIAELEAKIEALRDISRRGGDNALDLDKEIKQLEDKCLDLKKKTFSDLGAWEVAQLARHPERPYVLDYIELMFTEFDELAGDRAFADDKALVGGMARLDGRPVMIIGHQKGRGTKEKVRRNFGMPKPEGYRKAKRLMQMAERFKMPIITFIDTAGAYPGVGAEERGQSEAIATNLKIMSELSVPVICNVVGEGGSGGALAIGVGDYVNMLQYSTYSVISPEGCASILWRDSDKAPQAAEAMGLVAPRLKELELIDTIIDEPLGGAHRNHKATAENIKQRLIEQLNELEGFDEEALLERRYQRLMNYGYC.

Residues 35–296 enclose the CoA carboxyltransferase C-terminal domain; sequence DLDKEIKQLE…KQRLIEQLNE (262 aa).

Belongs to the AccA family. In terms of assembly, acetyl-CoA carboxylase is a heterohexamer composed of biotin carboxyl carrier protein (AccB), biotin carboxylase (AccC) and two subunits each of ACCase subunit alpha (AccA) and ACCase subunit beta (AccD).

The protein resides in the cytoplasm. The enzyme catalyses N(6)-carboxybiotinyl-L-lysyl-[protein] + acetyl-CoA = N(6)-biotinyl-L-lysyl-[protein] + malonyl-CoA. The protein operates within lipid metabolism; malonyl-CoA biosynthesis; malonyl-CoA from acetyl-CoA: step 1/1. Component of the acetyl coenzyme A carboxylase (ACC) complex. First, biotin carboxylase catalyzes the carboxylation of biotin on its carrier protein (BCCP) and then the CO(2) group is transferred by the carboxyltransferase to acetyl-CoA to form malonyl-CoA. The protein is Acetyl-coenzyme A carboxylase carboxyl transferase subunit alpha of Aliivibrio salmonicida (strain LFI1238) (Vibrio salmonicida (strain LFI1238)).